We begin with the raw amino-acid sequence, 219 residues long: Adenylate kinase (219 aa).

An ATP-binding site is contributed by 10 to 15 (GAGKGT). The NMP stretch occupies residues 30–59 (STGDMLRAAVKAGTPLGQQAKKIMDEGGLV). AMP-binding positions include Thr31, Arg36, 57–59 (GLV), 85–88 (GFPR), and Gln92. An LID region spans residues 122-159 (GRRVHPGSGRVYHVTHNPPRQEGKDDVTGEDLVQREDD). Residues Arg123 and 132 to 133 (VY) contribute to the ATP site. The segment at 128-150 (GSGRVYHVTHNPPRQEGKDDVTG) is disordered. Over residues 140–150 (PRQEGKDDVTG) the composition is skewed to basic and acidic residues. AMP-binding residues include Arg156 and Arg167. Arg203 is an ATP binding site.

Belongs to the adenylate kinase family. In terms of assembly, monomer.

Its subcellular location is the cytoplasm. The catalysed reaction is AMP + ATP = 2 ADP. It participates in purine metabolism; AMP biosynthesis via salvage pathway; AMP from ADP: step 1/1. In terms of biological role, catalyzes the reversible transfer of the terminal phosphate group between ATP and AMP. Plays an important role in cellular energy homeostasis and in adenine nucleotide metabolism. The sequence is that of Adenylate kinase from Halorhodospira halophila (strain DSM 244 / SL1) (Ectothiorhodospira halophila (strain DSM 244 / SL1)).